The chain runs to 579 residues: Alpha-glucosidase (579 aa).

The Nucleophile role is filled by Asp212. The active-site Proton donor is the Glu269.

This sequence belongs to the glycosyl hydrolase 13 family.

The catalysed reaction is Hydrolysis of terminal, non-reducing (1-&gt;4)-linked alpha-D-glucose residues with release of alpha-D-glucose.. This chain is Alpha-glucosidase (mal1), found in Schizosaccharomyces pombe (strain 972 / ATCC 24843) (Fission yeast).